The following is a 152-amino-acid chain: Small ribosomal subunit protein uS15 (152 aa).

Residues 1–10 (MAKMHTRTKG) show a composition bias toward basic residues. The disordered stretch occupies residues 1–26 (MAKMHTRTKGKSGSTKPIRSESPAWS). Positions 11-26 (KSGSTKPIRSESPAWS) are enriched in polar residues.

It belongs to the universal ribosomal protein uS15 family. In terms of assembly, part of the 30S ribosomal subunit.

This is Small ribosomal subunit protein uS15 from Methanococcoides burtonii (strain DSM 6242 / NBRC 107633 / OCM 468 / ACE-M).